A 298-amino-acid chain; its full sequence is Lipoyl synthase (298 aa).

Positions 40, 45, 51, 67, 71, 74, and 280 each coordinate [4Fe-4S] cluster. Positions alanine 53–serine 269 constitute a Radical SAM core domain.

Belongs to the radical SAM superfamily. Lipoyl synthase family. It depends on [4Fe-4S] cluster as a cofactor.

The protein resides in the cytoplasm. It carries out the reaction [[Fe-S] cluster scaffold protein carrying a second [4Fe-4S](2+) cluster] + N(6)-octanoyl-L-lysyl-[protein] + 2 oxidized [2Fe-2S]-[ferredoxin] + 2 S-adenosyl-L-methionine + 4 H(+) = [[Fe-S] cluster scaffold protein] + N(6)-[(R)-dihydrolipoyl]-L-lysyl-[protein] + 4 Fe(3+) + 2 hydrogen sulfide + 2 5'-deoxyadenosine + 2 L-methionine + 2 reduced [2Fe-2S]-[ferredoxin]. It functions in the pathway protein modification; protein lipoylation via endogenous pathway; protein N(6)-(lipoyl)lysine from octanoyl-[acyl-carrier-protein]. In terms of biological role, catalyzes the radical-mediated insertion of two sulfur atoms into the C-6 and C-8 positions of the octanoyl moiety bound to the lipoyl domains of lipoate-dependent enzymes, thereby converting the octanoylated domains into lipoylated derivatives. In Geobacillus thermodenitrificans (strain NG80-2), this protein is Lipoyl synthase.